The chain runs to 632 residues: Fem-3 mRNA-binding factor 2 (632 aa).

Residues 1–11 show a composition bias toward basic residues; that stretch reads MDQSKMRRTNQ. The segment at 1 to 37 is disordered; it reads MDQSKMRRTNQFRKTSQKPPSTGIDSYPTPAQSPMAQ. Residues 12-35 show a composition bias toward polar residues; that stretch reads FRKTSQKPPSTGIDSYPTPAQSPM. Residues 162–566 form the PUM-HD domain; that stretch reads TRSNNVLPTW…KMIETLANLR (405 aa). 8 Pumilio repeats span residues 187–225, 226–264, 271–307, 308–332, 345–384, 400–436, 438–473, and 484–521; these read EVLD…QLFE, QVIG…GYTK, NFIS…KLVQ, ALPR…QKVV, DFVA…DLTS, SVTN…CIIE, CLMR…EMMD, and DTGK…RQTK. Residues 609-632 form a disordered region; that stretch reads MLEPRSNKSSVSVKFSSSGSHGDD. Low complexity predominate over residues 615–632; it reads NKSSVSVKFSSSGSHGDD.

Interacts (via C-terminus) with gld-3 isoform A in an RNA-independent manner. Interacts with dlc-1, and is required for the localization of fbf-2 to P granules. Interacts (via RNA-binding domain) with lst-1, probably displaces bound auto-inhibitory C-terminal tail and alters its RNA-binding affinity. Expressed specifically in the germline (at protein level).

It localises to the cytoplasm. It is found in the cytoplasmic granule. RNA-binding protein that binds to the consensus sequence 5'-UGUGCCAUA-3' in mRNA 3'-UTRs. Involved in the control of stem cells and sex determination in the C.elegans hermaphrodite germline. May also play a role in the hermaphrodite germline proliferation and oogenesis. By binding to the 3'-UTR, represses phosphatase lip-1 expression in the distal part of the germline mitotic zone. Binds specifically to the regulatory region of fem-3 3'-UTR and mediates the sperm/oocyte switch. Negatively regulates gld-3 expression possibly by directly binding to two sites within the gld-3 isoform b 3'-UTR. Suppresses germline tumor formation by preventing the dedifferentiation of secondary spermatocytes. C-terminal disordered region probably auto-inhibits RNA binding; auto-inhibition may be reversed by interaction with lst-1. The protein is Fem-3 mRNA-binding factor 2 of Caenorhabditis elegans.